The following is a 566-amino-acid chain: KsdD-like steroid dehydrogenase MT0809 (566 aa).

23-54 (DAIVVGAGLAGLVAACELADRGLRVLILDQEN) contacts FAD.

Belongs to the FAD-dependent oxidoreductase 2 family. FAD serves as cofactor.

It functions in the pathway lipid metabolism; steroid biosynthesis. Functionally, able to catalyze the elimination of the C-1 and C-2 hydrogen atoms of the A-ring from the polycyclic ring structure of 3-ketosteroids. This chain is KsdD-like steroid dehydrogenase MT0809, found in Mycobacterium tuberculosis (strain CDC 1551 / Oshkosh).